The primary structure comprises 40 residues: Photosystem II reaction center protein J (40 aa).

Residues 8–28 (IPLWLIGTVTGILVIGLLGIF) form a helical membrane-spanning segment.

Belongs to the PsbJ family. As to quaternary structure, PSII is composed of 1 copy each of membrane proteins PsbA, PsbB, PsbC, PsbD, PsbE, PsbF, PsbH, PsbI, PsbJ, PsbK, PsbL, PsbM, PsbT, PsbX, PsbY, PsbZ, Psb30/Ycf12, at least 3 peripheral proteins of the oxygen-evolving complex and a large number of cofactors. It forms dimeric complexes.

It is found in the plastid. Its subcellular location is the chloroplast thylakoid membrane. In terms of biological role, one of the components of the core complex of photosystem II (PSII). PSII is a light-driven water:plastoquinone oxidoreductase that uses light energy to abstract electrons from H(2)O, generating O(2) and a proton gradient subsequently used for ATP formation. It consists of a core antenna complex that captures photons, and an electron transfer chain that converts photonic excitation into a charge separation. The polypeptide is Photosystem II reaction center protein J (Angiopteris evecta (Mule's foot fern)).